A 613-amino-acid polypeptide reads, in one-letter code: Dihydroxy-acid dehydratase (613 aa).

Asp-81 contacts Mg(2+). Residue Cys-122 participates in [2Fe-2S] cluster binding. Residues Asp-123 and Lys-124 each coordinate Mg(2+). Residue Lys-124 is modified to N6-carboxylysine. Cys-193 serves as a coordination point for [2Fe-2S] cluster. Residue Glu-489 coordinates Mg(2+). Ser-515 (proton acceptor) is an active-site residue.

This sequence belongs to the IlvD/Edd family. As to quaternary structure, homodimer. [2Fe-2S] cluster serves as cofactor. It depends on Mg(2+) as a cofactor.

The enzyme catalyses (2R)-2,3-dihydroxy-3-methylbutanoate = 3-methyl-2-oxobutanoate + H2O. It carries out the reaction (2R,3R)-2,3-dihydroxy-3-methylpentanoate = (S)-3-methyl-2-oxopentanoate + H2O. Its pathway is amino-acid biosynthesis; L-isoleucine biosynthesis; L-isoleucine from 2-oxobutanoate: step 3/4. The protein operates within amino-acid biosynthesis; L-valine biosynthesis; L-valine from pyruvate: step 3/4. Functionally, functions in the biosynthesis of branched-chain amino acids. Catalyzes the dehydration of (2R,3R)-2,3-dihydroxy-3-methylpentanoate (2,3-dihydroxy-3-methylvalerate) into 2-oxo-3-methylpentanoate (2-oxo-3-methylvalerate) and of (2R)-2,3-dihydroxy-3-methylbutanoate (2,3-dihydroxyisovalerate) into 2-oxo-3-methylbutanoate (2-oxoisovalerate), the penultimate precursor to L-isoleucine and L-valine, respectively. The sequence is that of Dihydroxy-acid dehydratase from Pseudomonas putida (strain ATCC 47054 / DSM 6125 / CFBP 8728 / NCIMB 11950 / KT2440).